A 401-amino-acid chain; its full sequence is MAVKKSVGSLKEADLKGKRVFVRVDLNVPLDENFNITDDTRIRAAVPTIKYLMQHGSHVILASHLGRPKGVTPKYSLKPLVPRLSELLGVEVKIANDSIGPEVEKLVAEIPEGGVLLLENVRFYKEEEKNEPEFAKKLASLADLYVNDAFGTAHRAHASTEGVAKYLKPAVAGFLMQKELDYLVGAVANPQKPFAAIVGGSKVSSKIGVIESLLEKVDVLLLGGGMIFTFYKAQGYAVGSSLVEEDKLDLATSLMEKAKAKGVSLLLPTDVVIADKFAADANSKVVPASEIPDGWMGLDIGPDAIKSFGSALDTTKTVIWNGPMGVFEFDKFAAGTEAIAKKLAELSGKGVTTIIGGGDSVAAVEKVGLAEKMSHISTGGGASLELLEGKPLPGVLALDDA.

The (2R)-3-phosphoglycerate site is built by valine 24, aspartate 25, asparagine 27, arginine 41, serine 63, histidine 64, glycine 66, arginine 67, arginine 122, histidine 154, and arginine 155. Glycine 200 contacts ADP. Glycine 200 serves as a coordination point for CDP. Residues lysine 202 and lysine 206 each coordinate AMP. An ATP-binding site is contributed by lysine 206. An ADP-binding site is contributed by glycine 224. Glycine 224 contributes to the CDP binding site. Positions 225 and 297 each coordinate AMP. Residues glycine 225 and glycine 297 each coordinate ATP. Residues glycine 322 and phenylalanine 327 each coordinate CDP. ADP is bound at residue phenylalanine 327. Glutamate 328 provides a ligand contact to AMP. The ATP site is built by glutamate 328, aspartate 359, and serine 360. Aspartate 359 provides a ligand contact to Mg(2+).

Belongs to the phosphoglycerate kinase family. As to quaternary structure, monomer. Mg(2+) serves as cofactor.

It is found in the cytoplasm. It carries out the reaction (2R)-3-phosphoglycerate + ATP = (2R)-3-phospho-glyceroyl phosphate + ADP. Its pathway is carbohydrate degradation; glycolysis; pyruvate from D-glyceraldehyde 3-phosphate: step 2/5. In Nicotiana tabacum (Common tobacco), this protein is Phosphoglycerate kinase, cytosolic.